Consider the following 161-residue polypeptide: Nucleotide-binding protein ABO_0048 (161 aa).

It belongs to the YajQ family.

In terms of biological role, nucleotide-binding protein. The sequence is that of Nucleotide-binding protein ABO_0048 from Alcanivorax borkumensis (strain ATCC 700651 / DSM 11573 / NCIMB 13689 / SK2).